Reading from the N-terminus, the 563-residue chain is Delta-1-pyrroline-5-carboxylate dehydrogenase, mitochondrial (563 aa).

The N-terminal 24 residues, 1 to 24 (MLLPAPALRRALLSRPWTGAGLRW), are a transit peptide targeting the mitochondrion. At Lys31 the chain carries N6-succinyllysine. Residue Ser44 is modified to Phosphoserine. An N6-acetyllysine modification is found at Lys52. N6-acetyllysine; alternate is present on residues Lys93, Lys99, Lys114, Lys130, and Lys175. 5 positions are modified to N6-succinyllysine; alternate: Lys93, Lys99, Lys114, Lys130, and Lys175. Residues Ser208, Lys233, and 286–290 (GSVPT) each bind NAD(+). Catalysis depends on Glu314, which acts as the Proton acceptor. At Lys318 the chain carries N6-acetyllysine. Lys347 is modified (N6-succinyllysine). The active-site Nucleophile is Cys348. Lys365 and Lys376 each carry N6-acetyllysine. N6-succinyllysine is present on Lys395. An NAD(+)-binding site is contributed by Glu447. N6-acetyllysine is present on Lys462. Lys509 bears the N6-acetyllysine; alternate mark. Lys509 carries the N6-succinyllysine; alternate modification. Ser513 is a binding site for substrate. An N6-acetyllysine mark is found at Lys531 and Lys552.

This sequence belongs to the aldehyde dehydrogenase family. As to quaternary structure, homodimer. Highest expression is found in liver followed by skeletal muscle, kidney, heart, brain, placenta, lung and pancreas.

It is found in the mitochondrion matrix. The enzyme catalyses L-glutamate 5-semialdehyde + NAD(+) + H2O = L-glutamate + NADH + 2 H(+). It participates in amino-acid degradation; L-proline degradation into L-glutamate; L-glutamate from L-proline: step 2/2. In terms of biological role, irreversible conversion of delta-1-pyrroline-5-carboxylate (P5C), derived either from proline or ornithine, to glutamate. This is a necessary step in the pathway interconnecting the urea and tricarboxylic acid cycles. The preferred substrate is glutamic gamma-semialdehyde, other substrates include succinic, glutaric and adipic semialdehydes. The sequence is that of Delta-1-pyrroline-5-carboxylate dehydrogenase, mitochondrial (ALDH4A1) from Homo sapiens (Human).